Consider the following 147-residue polypeptide: Small ribosomal subunit protein uS12 (147 aa).

Belongs to the universal ribosomal protein uS12 family. As to quaternary structure, part of the 30S ribosomal subunit.

Its function is as follows. With S4 and S5 plays an important role in translational accuracy. Located at the interface of the 30S and 50S subunits. This Staphylothermus marinus (strain ATCC 43588 / DSM 3639 / JCM 9404 / F1) protein is Small ribosomal subunit protein uS12.